Here is a 362-residue protein sequence, read N- to C-terminus: Flotillin-like protein FloA 2 (362 aa).

The chain crosses the membrane as a helical span at residues 24–44 (TALLIGALVIFAGIVVVLFIF).

It belongs to the flotillin-like FloA family. As to quaternary structure, homooligomerizes.

Its subcellular location is the cell membrane. The protein localises to the membrane raft. Found in functional membrane microdomains (FMM) that may be equivalent to eukaryotic membrane rafts. FMMs are highly dynamic and increase in number as cells age. Flotillins are thought to be important factors in membrane fluidity. The chain is Flotillin-like protein FloA 2 from Rhodopirellula baltica (strain DSM 10527 / NCIMB 13988 / SH1).